A 150-amino-acid chain; its full sequence is Ribonuclease K6 (150 aa).

An N-terminal signal peptide occupies residues 1-23 (MVLCFPLLLLLLVLWGQVCPLHA). The active-site Proton acceptor is histidine 38. Cystine bridges form between cysteine 46–cysteine 104, cysteine 60–cysteine 114, cysteine 78–cysteine 129, and cysteine 85–cysteine 92. Asparagine 55 is a glycosylation site (N-linked (GlcNAc...) asparagine). Residues 61 to 65 (KPQNT) and lysine 86 each bind substrate. N-linked (GlcNAc...) asparagine glycosylation occurs at asparagine 100. Arginine 105 contacts substrate. The active-site Proton donor is histidine 145.

Belongs to the pancreatic ribonuclease family. In terms of assembly, interacts (via N-terminus) with bacterial lipopolysaccharide (LPS).

The protein localises to the secreted. It is found in the lysosome. Its subcellular location is the cytoplasmic granule. In terms of biological role, ribonuclease which shows a preference for the pyrimidines uridine and cytosine. Has potent antibacterial activity against a range of Gram-positive and Gram-negative bacteria, including P.aeruginosa, A.baumanii, M.luteus, S.aureus, E.faecalis, E.faecium, S.saprophyticus and E.coli. Causes loss of bacterial membrane integrity, and also promotes agglutination of Gram-negative bacteria. Probably contributes to urinary tract sterility. Bactericidal activity is independent of RNase activity. This Saimiri sciureus (Common squirrel monkey) protein is Ribonuclease K6 (RNASE6).